A 211-amino-acid polypeptide reads, in one-letter code: Redox-sensing transcriptional repressor Rex (211 aa).

Positions 17 to 56 (KYHRYLEELLRNEVDRISSKELSKKIGFTASQIRQDFNCF) form a DNA-binding region, H-T-H motif. 91-96 (GGGNIG) lines the NAD(+) pocket.

Belongs to the transcriptional regulatory Rex family. Homodimer.

Its subcellular location is the cytoplasm. Modulates transcription in response to changes in cellular NADH/NAD(+) redox state. The polypeptide is Redox-sensing transcriptional repressor Rex (Clostridium tetani (strain Massachusetts / E88)).